A 130-amino-acid chain; its full sequence is MLKTLPPTLREKKRYVALEIIYEMELSQKDVISVVRNALLNYSGVLGCSRTNPWLIDYGHPYGILRISREEVDTLRSSLSLMGEHKKKPINIRIIGISNSVKHIREKFLHVPHEPYYKVIQKLKRKGPKK.

The protein belongs to the eukaryotic/archaeal RNase P protein component 2 family. Consists of a catalytic RNA component and at least 5 protein subunits.

It is found in the cytoplasm. It catalyses the reaction Endonucleolytic cleavage of RNA, removing 5'-extranucleotides from tRNA precursor.. In terms of biological role, part of ribonuclease P, a protein complex that generates mature tRNA molecules by cleaving their 5'-ends. The sequence is that of Ribonuclease P protein component 2 from Methanococcus maripaludis (strain DSM 14266 / JCM 13030 / NBRC 101832 / S2 / LL).